A 78-amino-acid polypeptide reads, in one-letter code: UPF0369 protein RP167 (78 aa).

The protein belongs to the SDHAF4 family.

This Rickettsia prowazekii (strain Madrid E) protein is UPF0369 protein RP167.